A 291-amino-acid polypeptide reads, in one-letter code: Kidney mitochondrial carrier protein 1 (291 aa).

At S2 the chain carries N-acetylserine. Solcar repeat units lie at residues 7-96, 104-189, and 198-289; these read KPFV…LKRL, ETLL…TKKH, and DTVS…LKKL. A run of 6 helical transmembrane segments spans residues 9-26, 71-89, 106-124, 164-183, 204-224, and 264-283; these read FVYGGLASITAECGTFPI, GIAPAMLRQASYGTIKIGT, LLINVVCGILSGVISSAIA, GVSLTAQRAAIVVGVELPVY, FLSSFTCGLVGALASNPVDVV, and GFWPNWLRLGPWNIIFFLTY.

This sequence belongs to the mitochondrial carrier (TC 2.A.29) family. Interacts with VDAC1.

The protein resides in the mitochondrion inner membrane. It catalyses the reaction sulfite(in) + sulfate(out) = sulfite(out) + sulfate(in). It carries out the reaction thiosulfate(in) + sulfate(out) = thiosulfate(out) + sulfate(in). The enzyme catalyses sulfate(out) + phosphate(in) = sulfate(in) + phosphate(out). The catalysed reaction is oxalate(in) + sulfate(out) = oxalate(out) + sulfate(in). It catalyses the reaction malonate(in) + sulfate(out) = malonate(out) + sulfate(in). It carries out the reaction maleate(in) + sulfate(out) = maleate(out) + sulfate(in). The enzyme catalyses (S)-malate(in) + sulfate(out) = (S)-malate(out) + sulfate(in). The catalysed reaction is (3S)-citramalate(in) + sulfate(out) = (3S)-citramalate(out) + sulfate(in). It catalyses the reaction (3R)-citramalate(in) + sulfate(out) = (3R)-citramalate(out) + sulfate(in). It carries out the reaction sulfate(out) + succinate(in) = sulfate(in) + succinate(out). The enzyme catalyses (S,S)-tartrate(in) + sulfate(out) = (S,S)-tartrate(out) + sulfate(in). The catalysed reaction is (2R,3R)-tartrate(in) + sulfate(out) = (2R,3R)-tartrate(out) + sulfate(in). It catalyses the reaction D-aspartate(in) + sulfate(out) = D-aspartate(out) + sulfate(in). It carries out the reaction L-aspartate(in) + sulfate(out) = L-aspartate(out) + sulfate(in). The enzyme catalyses sulfate(in) = sulfate(out). The catalysed reaction is phosphate(in) = phosphate(out). It catalyses the reaction (S)-malate(out) = (S)-malate(in). Its function is as follows. Antiporter that transports inorganic anions (sulfate, sulfite, thiosulfate and phosphate) and, to a lesser extent, a variety of dicarboxylates (e.g. malonate, malate and citramalate) and, even more so, aspartate. The sulfate/sulfate exchange is much higher than the phosphate/phosphate and malate/malate exchanges. The transport affinities is higher for sulfate and thiosulfate than for any other substrate. May catalyze the export of sulfite and thiosulfate (the hydrogen sulfide degradation products) from the mitochondria, thereby modulating the level of the hydrogen sulfide. Also may mediate a very low unidirectional transport of sulfate, phosphate and (S)-malate. This chain is Kidney mitochondrial carrier protein 1, found in Rattus norvegicus (Rat).